An 847-amino-acid polypeptide reads, in one-letter code: Mitogen-activated protein kinase kinase kinase 11 (847 aa).

The residue at position 11 (Ser11) is a Phosphoserine. Residues 11 to 38 (SPLGSWNGSGSGGGGGGGGGRPEGSPKA) are disordered. Over residues 17-32 (NGSGSGGGGGGGGGRP) the composition is skewed to gly residues. Position 35 is a phosphoserine (Ser35). One can recognise an SH3 domain in the interval 41-105 (YANPVWTALF…PSNYVSRGGG (65 aa)). Residues 117–379 (LRLEEVIGIG…ASILQQLEAL (263 aa)) enclose the Protein kinase domain. ATP-binding positions include 123 to 131 (IGIGGFGKV) and Lys144. Catalysis depends on Asp241, which acts as the Proton acceptor. Thr277 carries the phosphothreonine; by autocatalysis modification. Ser281 bears the Phosphoserine; by autocatalysis and MAP4K1 mark. Ser394 is subject to Phosphoserine. Leucine-zipper regions lie at residues 403–424 (IQGL…EEEL) and 438–459 (LRRR…ELTL). Residues Ser507, Ser524, Ser548, Ser555, and Ser556 each carry the phosphoserine modification. Residues 537–643 (PAEPGQAWGR…SSGTPKLIQR (107 aa)) are disordered. A compositionally biased stretch (basic and acidic residues) spans 550–562 (RRLEDSSNGERRA). Low complexity predominate over residues 597–609 (SSPLGSPSTPPAL). A phosphoserine mark is found at Ser654, Ser693, and Ser705. Positions 655 to 847 (LGLGRDLQPP…QAPWVPEAGP (193 aa)) are disordered. Residues 676 to 694 (TTPPTPTPAPCPTEPPPSP) show a composition bias toward pro residues. Thr708 is subject to Phosphothreonine. 9 positions are modified to phosphoserine: Ser724, Ser727, Ser740, Ser748, Ser758, Ser770, Ser789, Ser793, and Ser815. Low complexity predominate over residues 760-773 (PLGLISRPRPSPLR). The span at 787-799 (RPSPLPSPQPAPR) shows a compositional bias: pro residues. The segment covering 800-816 (RAPWTLFPDSDPFWDSP) has biased composition (low complexity).

The protein belongs to the protein kinase superfamily. STE Ser/Thr protein kinase family. MAP kinase kinase kinase subfamily. Homodimer; undergoes dimerization during activation. Interacts with MAP2K4/MKK4. Interacts with MAP2K7/MKK7. Found in a complex with SH3RF1, RAC1, MAP2K7/MKK7, MAPK8IP1/JIP1 and MAPK8/JNK1. It depends on Mg(2+) as a cofactor. Autophosphorylation on serine and threonine residues within the activation loop plays a role in enzyme activation. Thr-277 is likely to be the main autophosphorylation site. Phosphorylation of Ser-555 and Ser-556 is induced by CDC42. As to expression, expressed in a wide variety of normal and neoplastic tissues including fetal lung, liver, heart and kidney, and adult lung, liver, heart, kidney, placenta, skeletal muscle, pancreas and brain.

It is found in the cytoplasm. The protein localises to the cytoskeleton. Its subcellular location is the microtubule organizing center. The protein resides in the centrosome. It carries out the reaction L-seryl-[protein] + ATP = O-phospho-L-seryl-[protein] + ADP + H(+). The enzyme catalyses L-threonyl-[protein] + ATP = O-phospho-L-threonyl-[protein] + ADP + H(+). Homodimerization via the leucine zipper domains is required for autophosphorylation and subsequent activation. Its function is as follows. Activates the JUN N-terminal pathway. Required for serum-stimulated cell proliferation and for mitogen and cytokine activation of MAPK14 (p38), MAPK3 (ERK) and MAPK8 (JNK1) through phosphorylation and activation of MAP2K4/MKK4 and MAP2K7/MKK7. Plays a role in mitogen-stimulated phosphorylation and activation of BRAF, but does not phosphorylate BRAF directly. Influences microtubule organization during the cell cycle. This chain is Mitogen-activated protein kinase kinase kinase 11, found in Homo sapiens (Human).